A 311-amino-acid chain; its full sequence is Catabolite control protein B (311 aa).

The HTH lacI-type domain occupies 1 to 56 (MANIKEIARLANVSVSTVSRVLNHHPYVSEEKRKLVHQVMKELDYTPNRTAIDLIR). The segment at residues 4 to 23 (IKEIARLANVSVSTVSRVLN) is a DNA-binding region (H-T-H motif).

As to quaternary structure, seems to be complexed to phosphorylated HPr.

In terms of biological role, transcriptional regulator involved in catabolite repression of several operons. This chain is Catabolite control protein B (ccpB), found in Bacillus subtilis (strain 168).